A 273-amino-acid chain; its full sequence is 2,3,4,5-tetrahydropyridine-2,6-dicarboxylate N-succinyltransferase (273 aa).

Substrate-binding residues include Arg-106 and Asp-143.

This sequence belongs to the transferase hexapeptide repeat family. Homotrimer.

The protein localises to the cytoplasm. The catalysed reaction is (S)-2,3,4,5-tetrahydrodipicolinate + succinyl-CoA + H2O = (S)-2-succinylamino-6-oxoheptanedioate + CoA. The protein operates within amino-acid biosynthesis; L-lysine biosynthesis via DAP pathway; LL-2,6-diaminopimelate from (S)-tetrahydrodipicolinate (succinylase route): step 1/3. This Wolbachia sp. subsp. Brugia malayi (strain TRS) protein is 2,3,4,5-tetrahydropyridine-2,6-dicarboxylate N-succinyltransferase.